A 35-amino-acid chain; its full sequence is uncharacterized protein (35 aa).

This is an uncharacterized protein from Haemophilus influenzae (strain ATCC 51907 / DSM 11121 / KW20 / Rd).